The following is a 247-amino-acid chain: Segregation and condensation protein A (247 aa).

This sequence belongs to the ScpA family. In terms of assembly, component of a cohesin-like complex composed of ScpA, ScpB and the Smc homodimer, in which ScpA and ScpB bind to the head domain of Smc. The presence of the three proteins is required for the association of the complex with DNA.

The protein localises to the cytoplasm. In terms of biological role, participates in chromosomal partition during cell division. May act via the formation of a condensin-like complex containing Smc and ScpB that pull DNA away from mid-cell into both cell halves. In Bacillus anthracis (strain A0248), this protein is Segregation and condensation protein A.